We begin with the raw amino-acid sequence, 278 residues long: Embryonic polyadenylate-binding protein 2 (278 aa).

Disordered regions lie at residues 21–66 (VSSD…GDAG) and 101–128 (EGTP…LSPE). Residues 35-50 (ETKEILGPEGGEGKEE) are compositionally biased toward basic and acidic residues. Over residues 51 to 63 (KEEEEDAEEDQDG) the composition is skewed to acidic residues. Residues 147–224 (RSVYVGNVDY…RVIKVLPKRT (78 aa)) enclose the RRM domain. Positions 227 to 278 (PGISSTDRGGLRGHPGSRGAPFPHSGLQGRPRLRPQGQNRARGKFSPWFSPY) are disordered.

In terms of tissue distribution, expressed in various adult tissues.

It localises to the cytoplasm. Binds the poly(A) tail of mRNA. This is Embryonic polyadenylate-binding protein 2 (PABPN1L) from Homo sapiens (Human).